The chain runs to 569 residues: Glutamate--tRNA ligase (569 aa).

Positions P110–S120 match the 'HIGH' region motif.

The protein belongs to the class-I aminoacyl-tRNA synthetase family. Glutamate--tRNA ligase type 2 subfamily.

Its subcellular location is the cytoplasm. The enzyme catalyses tRNA(Glu) + L-glutamate + ATP = L-glutamyl-tRNA(Glu) + AMP + diphosphate. Functionally, catalyzes the attachment of glutamate to tRNA(Glu) in a two-step reaction: glutamate is first activated by ATP to form Glu-AMP and then transferred to the acceptor end of tRNA(Glu). This Methanococcoides burtonii (strain DSM 6242 / NBRC 107633 / OCM 468 / ACE-M) protein is Glutamate--tRNA ligase.